Here is a 562-residue protein sequence, read N- to C-terminus: Putative transport protein PC1_1686 (562 aa).

The next 6 helical transmembrane spans lie at 8–28, 32–52, 66–86, 93–113, 116–136, and 158–178; these read LLNG…LCLG, LGPV…LLGQ, FMLF…SIFF, FMLA…LGKF, WGIG…PVLV, and HLSL…IFGA. RCK C-terminal domains follow at residues 202-288 and 292-373; these read LDAD…NFRD and VFDR…RIGF. 5 helical membrane-spanning segments follow: residues 383–403, 406–426, 447–467, 478–498, and 537–557; these read LLAF…TIQF, FTFG…LGFL, FGLM…INSS, SGLI…AYVL, and GTYA…VIIW.

This sequence belongs to the AAE transporter (TC 2.A.81) family. YbjL subfamily.

Its subcellular location is the cell membrane. This Pectobacterium carotovorum subsp. carotovorum (strain PC1) protein is Putative transport protein PC1_1686.